Consider the following 681-residue polypeptide: Translation factor GUF1 homolog, chloroplastic (681 aa).

Residues 1-51 (MAMASAMDLSSPPTFFLSGTSTSSPSLRRLSSISVSGFRRHSNRKLQILCQ) constitute a chloroplast transit peptide. The tr-type G domain occupies 84–265 (SNIRNFSIIA…AIVQRIPAPL (182 aa)). GTP is bound by residues 93–100 (AHIDHGKS), 158–162 (DTPGH), and 212–215 (NKID).

This sequence belongs to the TRAFAC class translation factor GTPase superfamily. Classic translation factor GTPase family. LepA subfamily.

The protein localises to the plastid. It localises to the chloroplast. The enzyme catalyses GTP + H2O = GDP + phosphate + H(+). Promotes chloroplast protein synthesis. May act as a fidelity factor of the translation reaction, by catalyzing a one-codon backward translocation of tRNAs on improperly translocated ribosomes. The polypeptide is Translation factor GUF1 homolog, chloroplastic (Arabidopsis thaliana (Mouse-ear cress)).